Reading from the N-terminus, the 110-residue chain is Insulin (110 aa).

The signal sequence occupies residues 1 to 24 (MALWMRLLPLLALLALWGPDPAAA). Cystine bridges form between cysteine 31–cysteine 96, cysteine 43–cysteine 109, and cysteine 95–cysteine 100. The propeptide at 57–87 (EAEDLQVGQVELGGGPGAGSLQPLALEGSLQ) is c peptide.

The protein belongs to the insulin family. Heterodimer of a B chain and an A chain linked by two disulfide bonds.

The protein localises to the secreted. Functionally, insulin decreases blood glucose concentration. It increases cell permeability to monosaccharides, amino acids and fatty acids. It accelerates glycolysis, the pentose phosphate cycle, and glycogen synthesis in liver. The protein is Insulin (INS) of Gorilla gorilla gorilla (Western lowland gorilla).